A 321-amino-acid polypeptide reads, in one-letter code: 2-oxoglutarate-dependent dioxygenase frbH (321 aa).

The disordered stretch occupies residues 77-97 (SRNSDTHGYEPVATSTGAQDD). Positions 169–273 (ESLSTLSMFR…RFSIAYFLRA (105 aa)) constitute a Fe2OG dioxygenase domain. Residues His-194, Asp-196, and His-251 each contribute to the Fe cation site. Position 264 (Arg-264) interacts with 2-oxoglutarate.

The protein belongs to the iron/ascorbate-dependent oxidoreductase family.

It participates in antifungal biosynthesis. Functionally, 2-oxoglutarate-dependent dioxygenase; part of the gene cluster that mediates the biosynthesis of the antifungal antibiotic FR901469, an inhibitor of beta-1,3-glucansynthase, exerting antifungal activity against the pathogenes Candida albicans and Aspergillus fumigatus. FR901469 is a cyclic depsipeptide containing 12 amino acid residues and a fatty acid chain. The NRPS frbI contains 12 modules responsible for the formation of the depsipeptide backbone which is denoted as Acyl-Thr-Ala-Tyr-Val-4OHPro-Thr-Thr-3OHPro-threo3OHGln-Gly-Thr-Orn-OH (C71H116N14O23). The PKS frbB is probably involved in the production of the hydrocarbon chain, and the acyl-CoA ligase frbC might be involved in the transport of the chain to the peptide ptoduct of frbI. Because FR901469 contains 3 hydroxylated amino acid residues, the 3 oxygenases frbA, frbH, and frbJ might be participating in amino acid hydroxylation. As no thioesterase domains were detected in frbI or frbB, the thioesterases frbD and frbE may instead release and cyclize the products of the NRPS and PKS, respectively. This Dothideomycetidae sp. (strain 11243) (Fungal sp. (strain No.11243)) protein is 2-oxoglutarate-dependent dioxygenase frbH.